The chain runs to 314 residues: Homoserine O-acetyltransferase (314 aa).

Cysteine 142 acts as the Acyl-thioester intermediate in catalysis. 2 residues coordinate substrate: lysine 163 and serine 192. Catalysis depends on histidine 235, which acts as the Proton acceptor. The active site involves glutamate 237. A substrate-binding site is contributed by arginine 249.

It belongs to the MetA family.

Its subcellular location is the cytoplasm. The catalysed reaction is L-homoserine + acetyl-CoA = O-acetyl-L-homoserine + CoA. Its pathway is amino-acid biosynthesis; L-methionine biosynthesis via de novo pathway; O-acetyl-L-homoserine from L-homoserine: step 1/1. Transfers an acetyl group from acetyl-CoA to L-homoserine, forming acetyl-L-homoserine. This Azobacteroides pseudotrichonymphae genomovar. CFP2 protein is Homoserine O-acetyltransferase.